The sequence spans 32 residues: Lectin (32 aa).

Belongs to the leguminous lectin family. In terms of assembly, homotetramer.

Its function is as follows. Metalloglycoprotein, containing Ca, Mg, Mn, and Zn and the carbohydrates galactose, glucosamine, mannose, and fucose. It agglutinates erythrocytes of blood group A1. This Macrotyloma axillare (Perennial horse gram) protein is Lectin.